Reading from the N-terminus, the 289-residue chain is Protein FraH (289 aa).

Residues 4 to 49 form a DZANK-type zinc finger; that stretch reads CPNCNHPNPDGAVQCEACYTPLPATSNCPNCGATVQSDAAFCGQCG. The segment at 18–48 is a zinc-finger region; the sequence is CEACYTPLPATSNCPNCGATVQSDAAFCGQC. Residues 204-260 enclose the FHA domain; it reads VHIGKPNDRIPPDVDVSGFANSEIVSRVHADIRLEGDAHYIEDVGSSNGTYINNLPL.

In terms of biological role, putative heterocyst to vegetative cell connection. The sequence is that of Protein FraH (fraH) from Nostoc sp. (strain PCC 7120 / SAG 25.82 / UTEX 2576).